The primary structure comprises 910 residues: Putative disease resistance protein At1g58400 (910 aa).

The stretch at 15–57 forms a coiled coil; sequence DRLTQEYEQFQGVEDRIAELKSNLNLLKSFLKDAEAKKNTSQM. In terms of domain architecture, NB-ARC spans 148-460; that stretch reads REREMRQTFS…AEGILEPRHY (313 aa). 191-198 serves as a coordination point for ATP; it reads GMGGLGKT. 2 LRR repeats span residues 580-604 and 605-628; these read LELL…GIGK and LIHL…LGNL.

The protein belongs to the disease resistance NB-LRR family.

Potential disease resistance protein. This Arabidopsis thaliana (Mouse-ear cress) protein is Putative disease resistance protein At1g58400.